We begin with the raw amino-acid sequence, 323 residues long: Voltage-dependent calcium channel gamma-2 subunit (323 aa).

A helical transmembrane segment spans residues 10 to 30 (MLLTTVGAFAAFSLMTIAVGT). N-linked (GlcNAc...) asparagine glycosylation is present at N48. Helical transmembrane passes span 104–124 (SSIF…CIAA), 134–154 (IILS…IGII), and 182–202 (FGAL…HMFI). Residues 233 to 261 (YQRRSRSSSRSTEPSHSRDASPVGVKGFN) are disordered. S253 bears the Phosphoserine mark. The residue at position 271 (Y271) is a Phosphotyrosine. Residue T321 is modified to Phosphothreonine; by PKA.

This sequence belongs to the PMP-22/EMP/MP20 family. CACNG subfamily. The L-type calcium channel is composed of five subunits: alpha-1, alpha-2/delta, beta and gamma. Interacts with the PDZ domains of DLG4/PSD-95 and DLG1/SAP97. May interact with GOPC. Acts as an auxiliary subunit for AMPA-selective glutamate receptors (AMPARs). Found in a complex with GRIA1, GRIA2, GRIA3, GRIA4, CNIH2, CNIH3, CACNG3, CACNG4, CACNG5, CACNG7 and CACNG8. Interacts with GRIA1 and GRIA2. Interacts with MPP2. In terms of processing, phosphorylation of Thr-321 by PKA impairs interaction with DLG1 and DLG4. In terms of tissue distribution, brain.

Its subcellular location is the membrane. The protein resides in the synapse. It localises to the synaptosome. Regulates the trafficking and gating properties of AMPA-selective glutamate receptors (AMPARs). Promotes their targeting to the cell membrane and synapses and modulates their gating properties by slowing their rates of activation, deactivation and desensitization. Does not show subunit-specific AMPA receptor regulation and regulates all AMPAR subunits. Thought to stabilize the calcium channel in an inactivated (closed) state. The sequence is that of Voltage-dependent calcium channel gamma-2 subunit (Cacng2) from Mus musculus (Mouse).